Here is a 229-residue protein sequence, read N- to C-terminus: Urease accessory protein UreF (229 aa).

It belongs to the UreF family. As to quaternary structure, ureD, UreF and UreG form a complex that acts as a GTP-hydrolysis-dependent molecular chaperone, activating the urease apoprotein by helping to assemble the nickel containing metallocenter of UreC. The UreE protein probably delivers the nickel.

The protein resides in the cytoplasm. In terms of biological role, required for maturation of urease via the functional incorporation of the urease nickel metallocenter. This Ralstonia pickettii (strain 12J) protein is Urease accessory protein UreF.